A 403-amino-acid polypeptide reads, in one-letter code: MSPLLRVLNRTSLVTQIVIGLIAGIALALLAPAIALDLGFLGKVFVSALKAVAPVLVFILVMASIANHRHGQETHIRPILWLYLLGTFSAAVVAVVASMLFPSQLALSAGDVTLSAPGGIGEVLQNLVLSAVDNPINALLNANFIGVLTWAIGLGVALRHAGETTRTVVEDLSNGVTLIVRVVIRFAPLGIFGLVSSTLAQSGLDALLGYLHLLAVLIGCMLFVALVMNPLIVFWKIRRNPYPLTLLCLRESGITAFFTRSSAANIPVNLALSERLGLHEDTYSVSIPLGATINMAGAAITITVLTLAAVHTLGIPVDLPTAVLLSMVAAVCACGASGVAGGSLLLIPLACSLFGIPSEIAMQVVAVGFIIGVLQDSAETALNSSTDVLFTAAACQAQERRSA.

9 helical membrane-spanning segments follow: residues 16 to 36 (QIVIGLIAGIALALLAPAIAL), 45 to 65 (FVSALKAVAPVLVFILVMASI), 79 to 99 (ILWLYLLGTFSAAVVAVVASM), 138 to 158 (ALLNANFIGVLTWAIGLGVAL), 175 to 195 (GVTLIVRVVIRFAPLGIFGLV), 214 to 234 (LAVLIGCMLFVALVMNPLIVF), 295 to 315 (MAGAAITITVLTLAAVHTLGI), 327 to 347 (MVAAVCACGASGVAGGSLLLI), and 353 to 373 (LFGIPSEIAMQVVAVGFIIGV).

Belongs to the dicarboxylate/amino acid:cation symporter (DAACS) (TC 2.A.23) family.

The protein localises to the cell inner membrane. It carries out the reaction L-serine(in) + Na(+)(in) = L-serine(out) + Na(+)(out). The catalysed reaction is L-threonine(in) + Na(+)(in) = L-threonine(out) + Na(+)(out). Functionally, involved in the import of serine and threonine into the cell, with the concomitant import of sodium (symport system). The chain is Serine/threonine transporter SstT from Pseudomonas putida (strain W619).